Consider the following 314-residue polypeptide: Aspartate carbamoyltransferase catalytic subunit (314 aa).

Residues Arg-53 and Thr-54 each contribute to the carbamoyl phosphate site. Lys-82 lines the L-aspartate pocket. Carbamoyl phosphate contacts are provided by Arg-103, His-131, and Gln-134. L-aspartate contacts are provided by Arg-164 and Arg-230. Carbamoyl phosphate is bound by residues Leu-267 and Pro-268.

The protein belongs to the aspartate/ornithine carbamoyltransferase superfamily. ATCase family. In terms of assembly, heterooligomer of catalytic and regulatory chains.

It catalyses the reaction carbamoyl phosphate + L-aspartate = N-carbamoyl-L-aspartate + phosphate + H(+). It participates in pyrimidine metabolism; UMP biosynthesis via de novo pathway; (S)-dihydroorotate from bicarbonate: step 2/3. Its function is as follows. Catalyzes the condensation of carbamoyl phosphate and aspartate to form carbamoyl aspartate and inorganic phosphate, the committed step in the de novo pyrimidine nucleotide biosynthesis pathway. The chain is Aspartate carbamoyltransferase catalytic subunit from Methanococcus aeolicus (strain ATCC BAA-1280 / DSM 17508 / OCM 812 / Nankai-3).